A 364-amino-acid chain; its full sequence is NAC transcription factor 56 (364 aa).

The segment at 1–23 (MESTDSSGGPPPPQPNLPPGFRF) is disordered. Residues 9 to 18 (GPPPPQPNLP) are compositionally biased toward pro residues. The region spanning 17–178 (LPPGFRFHPT…DWVLCRIYKK (162 aa)) is the NAC domain. A DNA-binding region spans residues 116-184 (VGVKKALVFY…IYKKNNASRH (69 aa)).

Stamen specific, in anthers from stage 8. Expressed in the outer integument, but seems not expressed in the embryo at the torpedo stage.

The protein localises to the nucleus. Functionally, transcription factor of the NAC family. Together with NAC018/NARS2, regulates embryogenesis by regulating the development and degeneration of ovule integuments, a process required for intertissue communication between the embryo and the maternal integument. The chain is NAC transcription factor 56 from Arabidopsis thaliana (Mouse-ear cress).